The following is a 130-amino-acid chain: Protein ApaG (130 aa).

Positions 3–127 (KAETRGIMVT…FSLDSPHLRR (125 aa)) constitute an ApaG domain.

The sequence is that of Protein ApaG from Methylorubrum extorquens (strain CM4 / NCIMB 13688) (Methylobacterium extorquens).